The primary structure comprises 493 residues: Guanosine-5'-triphosphate,3'-diphosphate pyrophosphatase (493 aa).

This sequence belongs to the GppA/Ppx family. GppA subfamily.

It carries out the reaction guanosine 3'-diphosphate 5'-triphosphate + H2O = guanosine 3',5'-bis(diphosphate) + phosphate + H(+). Its pathway is purine metabolism; ppGpp biosynthesis; ppGpp from GTP: step 2/2. Functionally, catalyzes the conversion of pppGpp to ppGpp. Guanosine pentaphosphate (pppGpp) is a cytoplasmic signaling molecule which together with ppGpp controls the 'stringent response', an adaptive process that allows bacteria to respond to amino acid starvation, resulting in the coordinated regulation of numerous cellular activities. The chain is Guanosine-5'-triphosphate,3'-diphosphate pyrophosphatase from Salmonella choleraesuis (strain SC-B67).